The sequence spans 1049 residues: MLKPQPPQQTSQPQQPPPTQQAVARRSPGGTSPPNGGLPGPLTATAAPPGPPAAVSPCLGPAAAAGSGLRRGAESILAASAPPQHQERPGAVAIGSVRGQTTGKGPPQSPVFEGVYNNSRMLHFLTAVVGSTCDVKVKNGTTYEGIFKTLSSKFELAVDAVHRKASEPAGGPRREDIVDTMVFKPSDVLLVHFRNVDFNYATKDKFTDSAIAMNSKVNGEHKEKVLQRWEGGDSNSDDYDLESDMSNGWDPNEMFKFNEENYGVKTTYDSSLSSYTVPLEKDNSEEFRQRELRAAQLAREIESSPQYRLRIAMENDDGRTEEEKHSAVQRQGSGRESPSLVSREGKYIPLPQRVREGPRGGVRCSSSRGGRPGLSSLPPRGPHHLDNSSPGPGSEARGINGGPSRMSPKAQRPLRGAKTLSSPSNRPSGEASVPPTSAALPFLPVGRMYPPRSPKSAAPAPVSASCPEPPIGSAVASSASIPVTSSVVDPGAGSISPASPKLSLTPTDVKELPTKEPSRNLEAQELARIAGKVPGLQNEQKRFQLEELRKFGAQFKLQPSSSPETGLDPFPSRILKEEAKGKEKEVDGLLTSDPMGSPVSSKTESILDKEDKVPMAGVGGTEGPEQLPAPCPSQTGSPPVGLIKGDEKEEGPVTEQVKKSTLNPNAKEFNPTKPLLSVNKSTSTPTSPGPRTHSTPSIPVLTAGQSGLYSPQYISYIPQIHMGPAVQAPQMYPYPVSNSVPGQQGKYRGAKGSLPPQRSDQHQPASAPPMMQAAAAAAGPPLVAATPYSSYIPYNPQQFPGQPAMMQPMAHYPSQPVFAPMLQSNPRMLTSGSHPQAIVSSSTPQYPAAEQPTPQALYATVHQSYPHHATQLHGHQPQPATTPTGSQPQSQHAAPSPVQHQAGQAPHLGSGQPQQNLYHPGALTGTPPSLPPGPSAQSPQSSFPQPAAVYAIHPHQQLPHGFTNMAHVTQAHVQTGVTAAPPPHPGAPHPPQVMLLHPPQGHGGPPQGAVPPSGVPALSASTPSPYPYIGHPQVQSHPSQQLPFHPPGN.

Methionine 1 carries the post-translational modification N-acetylmethionine. Residues methionine 1 to alanine 54 are disordered. Position 27 is a phosphoserine (serine 27). Residue threonine 45 is modified to Phosphothreonine. An interaction with MPL region spans residues serine 96–serine 119. A Phosphoserine modification is found at serine 109. Tyrosine 116 is modified (phosphotyrosine). The 78-residue stretch at arginine 120 to aspartate 197 folds into the Sm domain. Lysine 205 bears the N6-acetyllysine mark. Serine 236 carries the phosphoserine modification. The residue at position 262 (tyrosine 262) is a Phosphotyrosine. Phosphoserine is present on serine 304. The residue at position 307 (tyrosine 307) is a Phosphotyrosine. Over residues glutamate 314–serine 326 the composition is skewed to basic and acidic residues. 7 disordered regions span residues glutamate 314–glutamate 522, glutamine 554–arginine 573, glutamate 578–glycine 704, valine 736–glutamine 772, serine 824–proline 852, histidine 868–proline 944, and proline 999–asparagine 1049. Residues valine 328–leucine 340 show a composition bias toward polar residues. Phosphoserine is present on residues serine 333 and serine 337. Residue lysine 346 forms a Glycyl lysine isopeptide (Lys-Gly) (interchain with G-Cter in SUMO2) linkage. At tyrosine 347 the chain carries Phosphotyrosine. Position 359 is an asymmetric dimethylarginine (arginine 359). The span at glycine 361 to proline 378 shows a compositional bias: low complexity. Phosphoserine occurs at positions 389, 407, and 453. Residues proline 454–cysteine 466 show a composition bias toward low complexity. Positions valine 475–valine 487 are enriched in polar residues. A phosphoserine mark is found at serine 496 and serine 499. The span at aspartate 508–arginine 519 shows a compositional bias: basic and acidic residues. Residues serine 560, serine 561, and serine 562 each carry the phosphoserine modification. Residues glutamate 578–aspartate 587 are compositionally biased toward basic and acidic residues. Serine 597 bears the Phosphoserine mark. Threonine 635 carries the phosphothreonine modification. Phosphoserine is present on residues serine 637, serine 677, serine 683, and serine 687. The span at serine 681–serine 697 shows a compositional bias: low complexity. 2 stretches are compositionally biased toward polar residues: residues serine 824–glutamine 845 and glutamine 878–alanine 902. The span at serine 935–proline 944 shows a compositional bias: low complexity. A compositionally biased stretch (polar residues) spans glutamine 1033–leucine 1042.

The protein belongs to the ataxin-2 family. Interacts with MPL/TPOR and EPOR and dissociates after ligand stimulation. Interacts with DDX6, G3BP, and ATXN2. Interacts with PRMT1. Interacts with CIC and ATXN1. Post-translationally, thrombopoietin triggers the phosphorylation on tyrosine residues in a way that is dependent on MPL C-terminal domain. In terms of processing, asymmetrically dimethylated. Probably methylated by PRMT1. Expressed in cerebellum.

It localises to the membrane. It is found in the cytoplasm. The protein resides in the nucleus speckle. The protein localises to the cytoplasmic granule. Functionally, involved in the regulation of stress granule and P-body formation. In Mus musculus (Mouse), this protein is Ataxin-2-like protein (Atxn2l).